The following is a 344-amino-acid chain: tRNA N6-adenosine threonylcarbamoyltransferase (344 aa).

Positions 112 and 116 each coordinate Fe cation. Residues 135 to 139, D168, G181, and N271 contribute to the substrate site; that span reads LVSGG. D299 lines the Fe cation pocket.

Belongs to the KAE1 / TsaD family. The cofactor is Fe(2+).

It localises to the cytoplasm. It carries out the reaction L-threonylcarbamoyladenylate + adenosine(37) in tRNA = N(6)-L-threonylcarbamoyladenosine(37) in tRNA + AMP + H(+). In terms of biological role, required for the formation of a threonylcarbamoyl group on adenosine at position 37 (t(6)A37) in tRNAs that read codons beginning with adenine. Is involved in the transfer of the threonylcarbamoyl moiety of threonylcarbamoyl-AMP (TC-AMP) to the N6 group of A37, together with TsaE and TsaB. TsaD likely plays a direct catalytic role in this reaction. The chain is tRNA N6-adenosine threonylcarbamoyltransferase from Sphingopyxis alaskensis (strain DSM 13593 / LMG 18877 / RB2256) (Sphingomonas alaskensis).